Consider the following 443-residue polypeptide: Ribosomal protein uS12 methylthiotransferase RimO (443 aa).

The MTTase N-terminal domain maps to 10–120 (PRVGFVSLGC…VMAAVHAQCP (111 aa)). [4Fe-4S] cluster contacts are provided by Cys-19, Cys-55, Cys-84, Cys-152, Cys-156, and Cys-159. The 238-residue stretch at 138-375 (LTPRHYAYLK…MALQAEISAR (238 aa)) folds into the Radical SAM core domain. In terms of domain architecture, TRAM spans 378-443 (ARRVGTECTV…DEHDLYGRVL (66 aa)).

The protein belongs to the methylthiotransferase family. RimO subfamily. The cofactor is [4Fe-4S] cluster.

The protein resides in the cytoplasm. The catalysed reaction is L-aspartate(89)-[ribosomal protein uS12]-hydrogen + (sulfur carrier)-SH + AH2 + 2 S-adenosyl-L-methionine = 3-methylsulfanyl-L-aspartate(89)-[ribosomal protein uS12]-hydrogen + (sulfur carrier)-H + 5'-deoxyadenosine + L-methionine + A + S-adenosyl-L-homocysteine + 2 H(+). Functionally, catalyzes the methylthiolation of an aspartic acid residue of ribosomal protein uS12. This is Ribosomal protein uS12 methylthiotransferase RimO from Alkalilimnicola ehrlichii (strain ATCC BAA-1101 / DSM 17681 / MLHE-1).